Here is a 408-residue protein sequence, read N- to C-terminus: Argininosuccinate synthase (408 aa).

Residues 12–20 (AYSGGLDTS) and alanine 39 each bind ATP. L-citrulline contacts are provided by tyrosine 90 and serine 95. Glycine 120 lines the ATP pocket. The L-aspartate site is built by threonine 122, asparagine 126, and aspartate 127. Residue asparagine 126 coordinates L-citrulline. Arginine 130, serine 181, serine 190, glutamate 266, and tyrosine 278 together coordinate L-citrulline.

Belongs to the argininosuccinate synthase family. Type 1 subfamily. Homotetramer.

Its subcellular location is the cytoplasm. It catalyses the reaction L-citrulline + L-aspartate + ATP = 2-(N(omega)-L-arginino)succinate + AMP + diphosphate + H(+). It functions in the pathway amino-acid biosynthesis; L-arginine biosynthesis; L-arginine from L-ornithine and carbamoyl phosphate: step 2/3. The polypeptide is Argininosuccinate synthase (Methylococcus capsulatus (strain ATCC 33009 / NCIMB 11132 / Bath)).